The following is an 821-amino-acid chain: DNA ligase (821 aa).

NAD(+)-binding positions include 50–54, 99–100, and Glu-140; these read DAEYD and SL. Lys-142 serves as the catalytic N6-AMP-lysine intermediate. 4 residues coordinate NAD(+): Arg-163, Glu-200, Lys-319, and Lys-343. Residues Cys-452, Cys-455, Cys-470, and Cys-476 each contribute to the Zn(2+) site. One can recognise a BRCT domain in the interval 742–821; the sequence is AAALPLEGKT…AGLQALLAGN (80 aa).

The protein belongs to the NAD-dependent DNA ligase family. LigA subfamily. Mg(2+) is required as a cofactor. It depends on Mn(2+) as a cofactor.

The enzyme catalyses NAD(+) + (deoxyribonucleotide)n-3'-hydroxyl + 5'-phospho-(deoxyribonucleotide)m = (deoxyribonucleotide)n+m + AMP + beta-nicotinamide D-nucleotide.. In terms of biological role, DNA ligase that catalyzes the formation of phosphodiester linkages between 5'-phosphoryl and 3'-hydroxyl groups in double-stranded DNA using NAD as a coenzyme and as the energy source for the reaction. It is essential for DNA replication and repair of damaged DNA. In Chromobacterium violaceum (strain ATCC 12472 / DSM 30191 / JCM 1249 / CCUG 213 / NBRC 12614 / NCIMB 9131 / NCTC 9757 / MK), this protein is DNA ligase.